The primary structure comprises 385 residues: 3,5,7-trioxododecanoyl-CoA synthase (385 aa).

Cys-157 is an active-site residue.

This sequence belongs to the thiolase-like superfamily. Chalcone/stilbene synthases family. As to expression, expressed in bracts, flowers and young leaves. Not detected in mature leaves, roots and stems. Expressed in glandular trichomes.

It catalyses the reaction hexanoyl-CoA + 3 malonyl-CoA + 3 H(+) = 3,5,7-trioxododecanoyl-CoA + 3 CO2 + 3 CoA. It carries out the reaction 3,5,7-trioxododecanoyl-CoA = olivetol + CO2 + CoA. It participates in secondary metabolite biosynthesis; terpenoid biosynthesis. Involved in the biosynthesis of cannabinoids-related terpenophenolic natural products, which have pharmacological activity. Polyketide synthase responsible for olivetol biosynthesis, from a C(12)-polyketide, probably 3,5,7-trioxododecanoyl-CoA. Catalyzes the first step in the cannabinoids biosynthetic pathway. The preferred substrate is hexanoyl-CoA, but also accepts CoA esters with C4 to C8 aliphatic side chains. When using malonyl-CoA and hexanoyl-CoA as substrates, produces undetermined compounds distinct form olivetol or olivetolic acid that could be hexanoyl triacetic acid lactone (HTAL) and pentyl diacetic acid lactone (PDAL). Produces olivetolic acid when acting in concert with olivetolic acid cyclase (OAC). The sequence is that of 3,5,7-trioxododecanoyl-CoA synthase from Cannabis sativa (Hemp).